The following is a 468-amino-acid chain: Mothers against decapentaplegic homolog 2 (468 aa).

The MH1 domain occupies 10–177; sequence PVVKRLLGWK…YQRVETPVLP (168 aa). Zn(2+) is bound by residues cysteine 75, cysteine 150, cysteine 162, and histidine 167. The tract at residues 224 to 254 is disordered; the sequence is PGYISEDGEASDQQMNQSMDTGSPAELSPST. Residues 234–244 show a composition bias toward polar residues; sequence SDQQMNQSMDT. In terms of domain architecture, MH2 spans 275 to 468; sequence WCSIAYYELN…SPSVRCSSMS (194 aa).

It belongs to the dwarfin/SMAD family.

The protein resides in the cytoplasm. It is found in the nucleus. Its function is as follows. Promotes differentiation of dorsal tissues. May be involved in the mediation of Ndr2 signaling during mesoderm and axis formation during embryogenesis. This Danio rerio (Zebrafish) protein is Mothers against decapentaplegic homolog 2 (smad2).